Here is a 394-residue protein sequence, read N- to C-terminus: Elongation factor Tu 2 (394 aa).

Positions 10–204 (KPHVNVGTIG…YLDTYIPEPE (195 aa)) constitute a tr-type G domain. The tract at residues 19-26 (GHVDHGKT) is G1. GTP is bound at residue 19–26 (GHVDHGKT). T26 provides a ligand contact to Mg(2+). Positions 60–64 (GITIN) are G2. Residues 81 to 84 (DCPG) are G3. GTP-binding positions include 81 to 85 (DCPGH) and 136 to 139 (NKCD). A G4 region spans residues 136–139 (NKCD). Residues 174–176 (SAL) form a G5 region.

This sequence belongs to the TRAFAC class translation factor GTPase superfamily. Classic translation factor GTPase family. EF-Tu/EF-1A subfamily. In terms of assembly, monomer.

It localises to the cytoplasm. It carries out the reaction GTP + H2O = GDP + phosphate + H(+). Functionally, GTP hydrolase that promotes the GTP-dependent binding of aminoacyl-tRNA to the A-site of ribosomes during protein biosynthesis. This Yersinia enterocolitica serotype O:8 / biotype 1B (strain NCTC 13174 / 8081) protein is Elongation factor Tu 2.